Here is a 288-residue protein sequence, read N- to C-terminus: Alpha/beta hydrolase domain-containing protein 17B (288 aa).

Catalysis depends on charge relay system residues Ser-170, Asp-235, and His-264.

This sequence belongs to the AB hydrolase superfamily. ABHD17 family. Palmitoylated on cysteine residues located in a cysteine cluster at the N-terminus which promotes membrane localization.

Its subcellular location is the cell membrane. The protein localises to the recycling endosome membrane. It localises to the cell projection. It is found in the dendritic spine. The protein resides in the postsynaptic density membrane. It catalyses the reaction S-hexadecanoyl-L-cysteinyl-[protein] + H2O = L-cysteinyl-[protein] + hexadecanoate + H(+). Functionally, hydrolyzes fatty acids from S-acylated cysteine residues in proteins. The polypeptide is Alpha/beta hydrolase domain-containing protein 17B (Xenopus tropicalis (Western clawed frog)).